Here is a 417-residue protein sequence, read N- to C-terminus: Serpin H1 (417 aa).

The N-terminal stretch at 1–17 (MRSLLLGTLCLLAVALA) is a signal peptide. At Lys-93 the chain carries N6-succinyllysine. 2 N-linked (GlcNAc...) asparagine glycosylation sites follow: Asn-119 and Asn-124. A Phosphoserine modification is found at Ser-140. N6-acetyllysine is present on Lys-206. Lys-295 carries the N6-succinyllysine modification. N6-acetyllysine is present on Lys-318. Asn-394 carries N-linked (GlcNAc...) asparagine glycosylation. The short motif at 414 to 417 (RDEL) is the Prevents secretion from ER element.

Belongs to the serpin family.

The protein resides in the endoplasmic reticulum lumen. In terms of biological role, binds specifically to collagen. Could be involved as a chaperone in the biosynthetic pathway of collagen. The polypeptide is Serpin H1 (Serpinh1) (Mus musculus (Mouse)).